A 1790-amino-acid polypeptide reads, in one-letter code: Non-reducing polyketide synthase gsfA (1790 aa).

The tract at residues 20-263 is N-terminal acylcarrier protein transacylase domain (SAT); sequence GDQRTLFRKL…AMRKIQGMWH (244 aa). In terms of domain architecture, Ketosynthase family 3 (KS3) spans 392 to 822; that stretch reads SSKIAVVGMS…GGNTAMIIEE (431 aa). Catalysis depends on for beta-ketoacyl synthase activity residues Cys-563, His-698, and His-741. Residues 922–1223 form a malonyl-CoA:ACP transacylase (MAT) domain region; that stretch reads FAFAGQGTFY…CSTLHRDSDN (302 aa). The product template (PT) domain stretch occupies residues 1298–1615; the sequence is TSSIHRLYSE…PRIMLNRFFQ (318 aa). An N-terminal hotdog fold region spans residues 1302-1435; sequence HRLYSENYDS…AYYEDPSTWL (134 aa). Positions 1302 to 1611 constitute a PKS/mFAS DH domain; it reads HRLYSENYDS…FRQWPRIMLN (310 aa). Catalysis depends on His-1334, which acts as the Proton acceptor; for dehydratase activity. A C-terminal hotdog fold region spans residues 1460 to 1611; the sequence is MANKLTTSLA…FRQWPRIMLN (152 aa). The Proton donor; for dehydratase activity role is filled by Asp-1518. Disordered stretches follow at residues 1621–1648 and 1686–1718; these read PPAPRVEKKRDAGRGTLPSSSSLQEKTT and LDYSLLTPRTSPNSDERIEKTDSDSGFEEADGA. The segment covering 1699 to 1708 has biased composition (basic and acidic residues); sequence SDERIEKTDS. Residues 1716 to 1790 enclose the Carrier domain; the sequence is DGANDVTSRA…TIGDLKKLLS (75 aa). At Ser-1753 the chain carries O-(pantetheine 4'-phosphoryl)serine.

It catalyses the reaction 6 malonyl-CoA + acetyl-CoA + 4 H(+) = 2-(2,4-dihydroxy-6-oxidobenzoyl)-5-hydroxy-3-methylbenzenolate + 6 CO2 + 7 CoA + H2O. It functions in the pathway secondary metabolite biosynthesis; terpenoid biosynthesis. Functionally, norlichexanthone synthase; part of the gene cluster that mediates the biosynthesis of griseofulvin, an important antifungal drug that has been in use for a long time for treating dermatophyte infections. The first step of the pathway is the formation of the heptaketide backbone by gsfA which is initiated by priming with acetyl-CoA, followed by sequential condensations of 6 malonyl-CoA units. The resulting benzophenone can undergo a spontaneous dehydration to form norlichexanthone. However, the true precursor for the griseofulvin biosynthesis is not norlichexanthone, but the heptaketide benzophenone that is O-methylated at 3-OH by gsfB to produce griseophenone D which is further methylated at 9-OH by gsfC to yield griseophenone C. Griseophenone C is then substrate of halogenase gsfI which is responsible for the regio-specific chlorination at the C13 position to form griseophenone B. The cytochrome P450 gsfF catalyzes the coupling of orcinol and phloroglucinol rings in griseophenone B to form desmethyl-dehydrogriseofulvin A which is further methylated at 5-OH by gsfD to yield dehydrogriseofulvin. Finally, gsfE performs stereospecific reduction of enone 18 of dehydrogriseofulvin to afford the final product griseofulvin. This chain is Non-reducing polyketide synthase gsfA, found in Penicillium aethiopicum.